Here is a 113-residue protein sequence, read N- to C-terminus: Pro-FMRFamide-related neuropeptide FF (113 aa).

The first 20 residues, 1 to 20 (MDSRQAAALLVLLLLIDGGC), serve as a signal peptide directing secretion. The propeptide occupies 21 to 65 (AEGPGGQQEDQLSAEEDSEPLPPQDAQTSGSLLHYLLQAMERPGR). A disordered region spans residues 22–48 (EGPGGQQEDQLSAEEDSEPLPPQDAQT). Residue F76 is modified to Phenylalanine amide. The propeptide occupies 79–92 (NTQGSWRNEWLSPR). F110 bears the Phenylalanine amide mark.

Belongs to the FARP (FMRFamide related peptide) family.

Its subcellular location is the secreted. Functionally, morphine modulating peptides. Have wide-ranging physiologic effects, including the modulation of morphine-induced analgesia, elevation of arterial blood pressure, and increased somatostatin secretion from the pancreas. Neuropeptide FF potentiates and sensitizes ASIC1 and ASIC3 channels. This Homo sapiens (Human) protein is Pro-FMRFamide-related neuropeptide FF.